A 128-amino-acid polypeptide reads, in one-letter code: Gastrotropin (128 aa).

Residue Ala2 is modified to N-acetylalanine.

This sequence belongs to the calycin superfamily. Fatty-acid binding protein (FABP) family. As to expression, expressed in ileum.

The protein resides in the cytoplasm. The protein localises to the membrane. In terms of biological role, binds to bile acids and is involved in enterohepatic bile acid metabolism. Required for efficient apical to basolateral transport of conjugated bile acids in ileal enterocytes. Stimulates gastric acid and pepsinogen secretion. This chain is Gastrotropin (FABP6), found in Oryctolagus cuniculus (Rabbit).